Consider the following 623-residue polypeptide: Serine/threonine-protein kinase nrc-2 (623 aa).

The segment at 1–215 is disordered; it reads MPSTKNANGE…GLGALPPPIR (215 aa). Composition is skewed to basic and acidic residues over residues 27–36 and 170–180; these read SKDHKDRDAH and LSKEPLEESKD. Positions 199–209 are enriched in low complexity; sequence LAAPDADGLGA. A Protein kinase domain is found at 242 to 532; sequence FDKIKLIGKG…ASDIKTHPFF (291 aa). ATP-binding positions include 248–256 and Lys271; that span reads IGKGDVGKV. Asp367 (proton acceptor) is an active-site residue. The disordered stretch occupies residues 569-596; sequence VDISGSRQMGLKGEPLESGMVTPGENAV.

It belongs to the protein kinase superfamily. Ser/Thr protein kinase family. KIN82 subfamily.

The catalysed reaction is L-seryl-[protein] + ATP = O-phospho-L-seryl-[protein] + ADP + H(+). It catalyses the reaction L-threonyl-[protein] + ATP = O-phospho-L-threonyl-[protein] + ADP + H(+). Its function is as follows. Controls entry of the cell into the asexual developmental program. Required to repress entry into the conidiation program. This is Serine/threonine-protein kinase nrc-2 (nrc-2) from Neurospora crassa (strain ATCC 24698 / 74-OR23-1A / CBS 708.71 / DSM 1257 / FGSC 987).